The sequence spans 627 residues: Alpha-terpineol synthase, chloroplastic (627 aa).

The transit peptide at 1–53 (MAGITGVMNMKLAARPSSGRHSRGCRPAVVPSAGKQMLLVRRHPPGSASWPTR) directs the protein to the chloroplast. The tract at residues 13–90 (AARPSSGRHS…EDRASRNTSS (78 aa)) is disordered. 5 residues coordinate (2E)-geranyl diphosphate: arginine 339, aspartate 376, aspartate 380, arginine 518, and aspartate 521. Mg(2+) contacts are provided by aspartate 376 and aspartate 380. Positions 376–380 (DDTYD) match the DDXXD motif motif. The Mg(2+) site is built by aspartate 521, serine 525, and glutamate 529.

Belongs to the terpene synthase family. Tpsb subfamily. In terms of assembly, monomer. The cofactor is Mg(2+). Mn(2+) serves as cofactor. In terms of tissue distribution, expressed in seedling leaf sheaths and roots.

It is found in the plastid. The protein localises to the chloroplast. The catalysed reaction is (2E)-geranyl diphosphate + H2O = (S)-alpha-terpineol + diphosphate. It carries out the reaction (2E)-geranyl diphosphate = (4S)-limonene + diphosphate. The enzyme catalyses (2E)-geranyl diphosphate = gamma-terpinene + diphosphate. It catalyses the reaction (2E)-geranyl diphosphate = beta-myrcene + diphosphate. The catalysed reaction is (2E)-geranyl diphosphate = terpinolene + diphosphate. It carries out the reaction (2E)-geranyl diphosphate + H2O = 4-terpineol + diphosphate. It functions in the pathway secondary metabolite biosynthesis; terpenoid biosynthesis. Functionally, component of the volatile terpenes biosynthesis pathways. Mediates the synthesis of a blend of monoterpenes. Converts mainly geranyl diphosphate to alpha-terpineol. Also triggers the biosynthesis of minor monoterpenes including limonene, gamma-terpinene, beta-myrcene, terpinolene and 4-terpineol. This is Alpha-terpineol synthase, chloroplastic from Zea mays (Maize).